Reading from the N-terminus, the 148-residue chain is 3-dehydroquinate dehydratase (148 aa).

Substrate contacts are provided by Asn-74, His-80, and Asp-87. His-100 (proton donor) is an active-site residue. Substrate is bound by residues 101–102 (LS) and Arg-111.

Belongs to the type-II 3-dehydroquinase family. In terms of assembly, homododecamer.

It catalyses the reaction 3-dehydroquinate = 3-dehydroshikimate + H2O. It functions in the pathway metabolic intermediate biosynthesis; chorismate biosynthesis; chorismate from D-erythrose 4-phosphate and phosphoenolpyruvate: step 3/7. The polypeptide is 3-dehydroquinate dehydratase (yqhS) (Bacillus subtilis (strain 168)).